The sequence spans 294 residues: Sperm acrosome membrane-associated protein 1 (294 aa).

Positions 1-29 (MSPRGTGCSAGLLMTVGWLLLAGLQSARG) are cleaved as a signal peptide. Residues 30–221 (TNVTAAVQDA…LPATDAALIF (192 aa)) lie on the Extracellular side of the membrane. Asn-31 carries an N-linked (GlcNAc...) asparagine glycan. Positions 42–70 (AHEGEGEEETENNDSETAENYAPPETEDV) are disordered. Acidic residues predominate over residues 46-58 (EGEEETENNDSET). A helical membrane pass occupies residues 222-242 (VLTIGVIICVFIIFLLIFIII). Over 243–294 (NWAAVKAFWGAKASTPEVQSEQSSVRYKDSTSLDQLPTEMPGEDDALSEWNE) the chain is Cytoplasmic. Ser-256 carries the post-translational modification Phosphoserine. A compositionally biased stretch (polar residues) spans 258-267 (PEVQSEQSSV). The segment at 258-294 (PEVQSEQSSVRYKDSTSLDQLPTEMPGEDDALSEWNE) is disordered. A Phosphotyrosine modification is found at Tyr-269. Over residues 283–294 (PGEDDALSEWNE) the composition is skewed to acidic residues. Ser-290 carries the phosphoserine modification.

In terms of assembly, interacts with CYLC1; the interaction may be relevant for proper acrosome attachment to the nuclear envelope. Post-translationally, N-glycosylated. In terms of tissue distribution, testis specific.

The protein resides in the cytoplasmic vesicle. It localises to the secretory vesicle. It is found in the acrosome inner membrane. Its function is as follows. Plays a role in acrosome formation and establishment of normal sperm morphology during spermatogenesis. Important for male fertility. This chain is Sperm acrosome membrane-associated protein 1 (SPACA1), found in Homo sapiens (Human).